The chain runs to 120 residues: uncharacterized protein (120 aa).

A helical membrane pass occupies residues 40 to 62 (SFLTDALLNLIYILFFSSSVFNW).

It localises to the membrane. This is an uncharacterized protein from Saccharomyces cerevisiae (strain ATCC 204508 / S288c) (Baker's yeast).